The following is a 178-amino-acid chain: Cell division protein SepF (178 aa).

Over residues 19–45 (EHYESEHHTPHKDEDDSMEHDREERRA) the composition is skewed to basic and acidic residues. The tract at residues 19–65 (EHYESEHHTPHKDEDDSMEHDREERRAPAPVREIARETPTPHAAEEE) is disordered.

The protein belongs to the SepF family. As to quaternary structure, homodimer. Interacts with FtsZ.

It localises to the cytoplasm. Functionally, cell division protein that is part of the divisome complex and is recruited early to the Z-ring. Probably stimulates Z-ring formation, perhaps through the cross-linking of FtsZ protofilaments. Its function overlaps with FtsA. The protein is Cell division protein SepF of Arthrobacter sp. (strain FB24).